A 113-amino-acid polypeptide reads, in one-letter code: Propane 2-monooxygenase, effector component (113 aa).

Belongs to the TmoD/XamoD family. In terms of assembly, the propane 2-monooxygenase multicomponent enzyme system is composed of an electron transfer component and a monooxygenase component interacting with the effector protein PrmD. The electron transfer component is composed of a reductase (PrmB), and the monooxygenase component is formed by a large subunit (PrmA) and a small subunit (PrmC).

Its function is as follows. Effector component of the propane 2-monooxygenase multicomponent enzyme system which is involved in the degradation of propane via the O2-dependent hydroxylation of propane. In Rhodococcus jostii (strain RHA1), this protein is Propane 2-monooxygenase, effector component.